The sequence spans 213 residues: Golgi apparatus membrane protein TVP23 homolog A (213 aa).

Transmembrane regions (helical) follow at residues 32–52 (PLAT…YVSC), 54–74 (WFSK…SLDF), 123–143 (IFWL…FSTL), and 150–170 (WLAL…GYIL).

Belongs to the TVP23 family.

Its subcellular location is the membrane. In Homo sapiens (Human), this protein is Golgi apparatus membrane protein TVP23 homolog A (TVP23A).